Consider the following 347-residue polypeptide: Protein RecA (347 aa).

Residue 67 to 74 (GPESSGKT) coordinates ATP.

It belongs to the RecA family. In terms of processing, the protein migrates as a 40 kDa protein in strains 69A and NCTC 11637. When overexpressed in E.coli a 38 kDa protein is made which is unable to complement the E.coli deletion mutant. It has been suggested this size difference is due to a post-translational modification.

It is found in the cytoplasm. Can catalyze the hydrolysis of ATP in the presence of single-stranded DNA, the ATP-dependent uptake of single-stranded DNA by duplex DNA, and the ATP-dependent hybridization of homologous single-stranded DNAs. It interacts with LexA causing its activation and leading to its autocatalytic cleavage. Functionally, deletion of this gene leads to the inability of the bacteria to perform homologous recombination, and markedly increases UV sensitivity. This Helicobacter pylori (strain ATCC 700392 / 26695) (Campylobacter pylori) protein is Protein RecA.